Here is a 356-residue protein sequence, read N- to C-terminus: Outer membrane protein Omp38 (356 aa).

An N-terminal signal peptide occupies residues 1–19 (MKLSRIALATMLVAAPLAA). Residues 221–339 (ELTEDLNMEL…RVFATITGSR (119 aa)) enclose the OmpA-like domain.

The protein belongs to the outer membrane OOP (TC 1.B.6) superfamily. In terms of assembly, homotrimer.

The protein resides in the cell outer membrane. Its function is as follows. Porin. Induces apoptosis in human cells through caspases-dependent and AIF-dependent pathways. Purified Omp38 enters the cells and localizes to the mitochondria, which leads to a release of proapoptotic molecules such as cytochrome c and AIF (apoptosis-inducing factor). This chain is Outer membrane protein Omp38 (omp38), found in Acinetobacter baumannii (strain ATCC 17978 / DSM 105126 / CIP 53.77 / LMG 1025 / NCDC KC755 / 5377).